Consider the following 472-residue polypeptide: Adenosylhomocysteinase (472 aa).

The substrate site is built by threonine 61, aspartate 136, and glutamate 196. NAD(+) is bound at residue 197–199 (TTT). Residues lysine 226 and aspartate 230 each contribute to the substrate site. NAD(+) is bound by residues asparagine 231, 260-265 (GYGDVG), glutamate 283, asparagine 318, 339-341 (IGH), and asparagine 384.

It belongs to the adenosylhomocysteinase family. NAD(+) is required as a cofactor.

It is found in the cytoplasm. It catalyses the reaction S-adenosyl-L-homocysteine + H2O = L-homocysteine + adenosine. It participates in amino-acid biosynthesis; L-homocysteine biosynthesis; L-homocysteine from S-adenosyl-L-homocysteine: step 1/1. May play a key role in the regulation of the intracellular concentration of adenosylhomocysteine. In Cupriavidus necator (strain ATCC 17699 / DSM 428 / KCTC 22496 / NCIMB 10442 / H16 / Stanier 337) (Ralstonia eutropha), this protein is Adenosylhomocysteinase.